The sequence spans 232 residues: Large ribosomal subunit protein uL1 (232 aa).

This sequence belongs to the universal ribosomal protein uL1 family. In terms of assembly, part of the 50S ribosomal subunit.

Binds directly to 23S rRNA. The L1 stalk is quite mobile in the ribosome, and is involved in E site tRNA release. Its function is as follows. Protein L1 is also a translational repressor protein, it controls the translation of the L11 operon by binding to its mRNA. The polypeptide is Large ribosomal subunit protein uL1 (Bacillus pumilus (strain SAFR-032)).